A 147-amino-acid polypeptide reads, in one-letter code: Ubiquitin-conjugating enzyme E2 2 (147 aa).

The UBC core domain occupies 1–147 (MALKRIQKEL…AREWTQKYAM (147 aa)). The Glycyl thioester intermediate role is filled by cysteine 85.

The protein belongs to the ubiquitin-conjugating enzyme family. Interacts with the brc-1-brd-1 heterodimer following ionizing irradiation. In terms of tissue distribution, expressed in the nervous system.

It localises to the nucleus. It is found in the chromosome. The protein localises to the cytoplasm. It catalyses the reaction S-ubiquitinyl-[E1 ubiquitin-activating enzyme]-L-cysteine + [E2 ubiquitin-conjugating enzyme]-L-cysteine = [E1 ubiquitin-activating enzyme]-L-cysteine + S-ubiquitinyl-[E2 ubiquitin-conjugating enzyme]-L-cysteine.. The protein operates within protein modification; protein ubiquitination. Its function is as follows. Catalyzes the covalent attachment of ubiquitin to other proteins. Mediates the selective degradation of short-lived and abnormal proteins. Plays a role in the DNA damage response. In particular, in response to ionizing radiation, associates with the E3 ubiquitin-protein ligase brc-1-brd-1 heterodimer on chromatin to activate E3-ubiquitin ligase activity of the heterodimer, and thus its DNA damage repair mechanisms. Required, cell autonomously, for death of the linker cell, a male-specific cell which guides the elongation of the gonad; perhaps acting as part of the ubiquitin proteasome system (UPS) and modulated by heat shock transcription factor hsf-1. The protein is Ubiquitin-conjugating enzyme E2 2 of Caenorhabditis elegans.